We begin with the raw amino-acid sequence, 1241 residues long: Dinoflagellate luciferase (1241 aa).

3 luciferase regions span residues Lys-114 to Asp-465, Asp-491 to Asp-842, and Glu-868 to Asp-1218.

Belongs to the calycin superfamily. Luciferase family.

The protein resides in the cytoplasmic vesicle. The catalysed reaction is dinoflagellate luciferin + O2 = oxidized dinoflagellate luciferin + hnu + H2O + H(+). Its activity is regulated as follows. Regulated by pH: upon acidification, at a pH of 6.3, dinoflagellate luciferin is released from luciferin-binding protein LBP, allowing the interaction between Dinoflagellate luciferase and its substrate luciferin. Its function is as follows. Emits blue light flashes with a wavelength of 475 nm during the night phase. This chain is Dinoflagellate luciferase, found in Lingulodinium polyedra (Dinoflagellate).